We begin with the raw amino-acid sequence, 232 residues long: Large ribosomal subunit protein uL10c (232 aa).

The transit peptide at 1–52 (MESTLFLSKPLPTTIKTTTHSLSSVYPNPFKPNNLTFPRTTHKHPTTTTITA) directs the protein to the chloroplast.

The protein belongs to the universal ribosomal protein uL10 family. As to quaternary structure, component of the chloroplast large ribosomal subunit (LSU). Mature 70S chloroplast ribosomes of higher plants consist of a small (30S) and a large (50S) subunit. The 30S small subunit contains 1 molecule of ribosomal RNA (16S rRNA) and 24 different proteins. The 50S large subunit contains 3 rRNA molecules (23S, 5S and 4.5S rRNA) and 33 different proteins.

The protein resides in the plastid. It is found in the chloroplast. In terms of biological role, component of the chloroplast ribosome (chloro-ribosome), a dedicated translation machinery responsible for the synthesis of chloroplast genome-encoded proteins, including proteins of the transcription and translation machinery and components of the photosynthetic apparatus. The protein is Large ribosomal subunit protein uL10c (RPL10) of Spinacia oleracea (Spinach).